We begin with the raw amino-acid sequence, 486 residues long: Cardiolipin synthase A (486 aa).

2 consecutive transmembrane segments (helical) span residues 3 to 23 (TFYT…IAGV) and 38 to 58 (MAWL…YLSL). PLD phosphodiesterase domains are found at residues 219 to 246 (MDLR…VDPR) and 399 to 426 (EGGL…DMRS). Residues histidine 224, lysine 226, aspartate 231, histidine 404, lysine 406, and aspartate 411 contribute to the active site.

It belongs to the phospholipase D family. Cardiolipin synthase subfamily. ClsA sub-subfamily.

The protein localises to the cell inner membrane. It carries out the reaction 2 a 1,2-diacyl-sn-glycero-3-phospho-(1'-sn-glycerol) = a cardiolipin + glycerol. In terms of biological role, catalyzes the reversible phosphatidyl group transfer from one phosphatidylglycerol molecule to another to form cardiolipin (CL) (diphosphatidylglycerol) and glycerol. In Erwinia tasmaniensis (strain DSM 17950 / CFBP 7177 / CIP 109463 / NCPPB 4357 / Et1/99), this protein is Cardiolipin synthase A.